A 406-amino-acid chain; its full sequence is Tyrosine-protein phosphatase non-receptor type 2 (406 aa).

The Tyrosine-protein phosphatase domain occupies 5–275 (IEREFEELDA…RFSYMAIIEG (271 aa)). The residue at position 22 (tyrosine 22) is a Phosphotyrosine. Residue serine 52 is modified to Phosphoserine. Phosphotyrosine is present on tyrosine 68. Residues aspartate 182, 216 to 222 (CSAGIGR), and glutamine 260 contribute to the substrate site. Catalysis depends on cysteine 216, which acts as the Phosphocysteine intermediate. Cysteine 216 carries the post-translational modification S-nitrosocysteine. Serine 293, serine 298, serine 304, serine 320, and serine 339 each carry phosphoserine. The tract at residues 341 to 406 (ESILRKRIRE…ALVGWTLLFH (66 aa)) is endoplasmic reticulum location. Positions 371–406 (ERKRKRWLYWQPILTKMGFVSVILVGALVGWTLLFH) are mediates interaction with STX17.

Belongs to the protein-tyrosine phosphatase family. Non-receptor class 1 subfamily. As to quaternary structure, interacts with RMDN3. Isoform 1 interacts with TMED9. Isoform 1 interacts with STX17; dephosphorylates STX17. Interacts with ITGA1 (via cytoplasmic domain); activates the phosphatase activity towards EGFR. Interacts with TRAF2; probably involved in tumor necrosis factor-mediated signaling. Interacts with MET. Interacts with FAM220A and STAT3; interaction with FAM220A promotes interaction of PTPN2 with transcriptional activator STAT3, leading to dephosphorylation of STAT3 by PTPN2 and negative regulation of STAT3 transcriptional activator activity. Specifically phosphorylated in a cell cycle-dependent manner by cyclin-dependent kinases CDK1 and CDK2. Probably activated through phosphorylation by PKR. Ubiquitously expressed. The highest expression levels were found in ovary, testis, thymus and kidney.

The protein resides in the endoplasmic reticulum. The protein localises to the endoplasmic reticulum-Golgi intermediate compartment. Its subcellular location is the nucleus. It localises to the cytoplasm. It is found in the cell membrane. The enzyme catalyses O-phospho-L-tyrosyl-[protein] + H2O = L-tyrosyl-[protein] + phosphate. Its function is as follows. Non-receptor type tyrosine-specific phosphatase that dephosphorylates receptor protein tyrosine kinases including INSR, EGFR, CSF1R, PDGFR. Also dephosphorylates non-receptor protein tyrosine kinases like JAK1, JAK2, JAK3, Src family kinases, STAT1, STAT3 and STAT6 either in the nucleus or the cytoplasm. Negatively regulates numerous signaling pathways and biological processes like hematopoiesis, inflammatory response, cell proliferation and differentiation, and glucose homeostasis. Plays a multifaceted and important role in the development of the immune system. Functions in T-cell receptor signaling through dephosphorylation of FYN and LCK to control T-cells differentiation and activation. Dephosphorylates CSF1R, negatively regulating its downstream signaling and macrophage differentiation. Negatively regulates cytokine (IL2/interleukin-2 and interferon)-mediated signaling through dephosphorylation of the cytoplasmic kinases JAK1, JAK3 and their substrate STAT1, that propagate signaling downstream of the cytokine receptors. Also regulates the IL6/interleukin-6 and IL4/interleukin-4 cytokine signaling through dephosphorylation of STAT3 and STAT6 respectively. In addition to the immune system, it is involved in anchorage-dependent, negative regulation of EGF-stimulated cell growth. Activated by the integrin ITGA1/ITGB1, it dephosphorylates EGFR and negatively regulates EGF signaling. Dephosphorylates PDGFRB and negatively regulates platelet-derived growth factor receptor-beta signaling pathway and therefore cell proliferation. Negatively regulates tumor necrosis factor-mediated signaling downstream via MAPK through SRC dephosphorylation. May also regulate the hepatocyte growth factor receptor signaling pathway through dephosphorylation of the hepatocyte growth factor receptor MET. Also plays an important role in glucose homeostasis. For instance, negatively regulates the insulin receptor signaling pathway through the dephosphorylation of INSR and control gluconeogenesis and liver glucose production through negative regulation of the IL6 signaling pathways. May also bind DNA. In Mus musculus (Mouse), this protein is Tyrosine-protein phosphatase non-receptor type 2 (Ptpn2).